We begin with the raw amino-acid sequence, 55 residues long: ATP synthase F(0) complex subunit 8 (55 aa).

Residues 4–24 (LNPSPWFIILLFSWVIFMVIL) traverse the membrane as a helical segment.

The protein belongs to the ATPase protein 8 family. As to quaternary structure, component of the ATP synthase complex composed at least of ATP5F1A/subunit alpha, ATP5F1B/subunit beta, ATP5MC1/subunit c (homooctomer), MT-ATP6/subunit a, MT-ATP8/subunit 8, ATP5ME/subunit e, ATP5MF/subunit f, ATP5MG/subunit g, ATP5MK/subunit k, ATP5MJ/subunit j, ATP5F1C/subunit gamma, ATP5F1D/subunit delta, ATP5F1E/subunit epsilon, ATP5PF/subunit F6, ATP5PB/subunit b, ATP5PD/subunit d, ATP5PO/subunit OSCP. ATP synthase complex consists of a soluble F(1) head domain (subunits alpha(3) and beta(3)) - the catalytic core - and a membrane F(0) domain - the membrane proton channel (subunits c, a, 8, e, f, g, k and j). These two domains are linked by a central stalk (subunits gamma, delta, and epsilon) rotating inside the F1 region and a stationary peripheral stalk (subunits F6, b, d, and OSCP).

Its subcellular location is the mitochondrion membrane. In terms of biological role, subunit 8, of the mitochondrial membrane ATP synthase complex (F(1)F(0) ATP synthase or Complex V) that produces ATP from ADP in the presence of a proton gradient across the membrane which is generated by electron transport complexes of the respiratory chain. ATP synthase complex consist of a soluble F(1) head domain - the catalytic core - and a membrane F(1) domain - the membrane proton channel. These two domains are linked by a central stalk rotating inside the F(1) region and a stationary peripheral stalk. During catalysis, ATP synthesis in the catalytic domain of F(1) is coupled via a rotary mechanism of the central stalk subunits to proton translocation. In vivo, can only synthesize ATP although its ATP hydrolase activity can be activated artificially in vitro. Part of the complex F(0) domain. This is ATP synthase F(0) complex subunit 8 from Scyliorhinus canicula (Small-spotted catshark).